A 265-amino-acid polypeptide reads, in one-letter code: MIESQRHSYHLVDPSPWPISGSLGALATTVGGVMYMHSFQGGATLLSLGLIFILYTMFVWWRDVLRESTLEGHHTKAVQLGLRYGFILFIVSEVMFFFAFFWAFFHSSLAPTVEIGGIWPPKGIGVLDPWEIPLLNTLILLSSGAAVTWAHHAILAGKEKRAVYALVATVLLALVFTGFQGMEYYQAPFTISDSIYGSTFFLATGFHGFHVIIGTLFLIVCGIRQYLGQMTKKHHVGFEAAAWYWHFVDVVWLFLFVSIYWWGGI.

6 helical membrane passes run Gly-41–Trp-61, Gly-85–Phe-105, Thr-137–Gly-157, Ala-162–Met-182, Phe-200–Val-220, and Trp-245–Ile-265.

Belongs to the cytochrome c oxidase subunit 3 family. As to quaternary structure, component of the cytochrome c oxidase (complex IV, CIV), a multisubunit enzyme composed of a catalytic core of 3 subunits and several supernumerary subunits. The complex exists as a monomer or a dimer and forms supercomplexes (SCs) in the inner mitochondrial membrane with ubiquinol-cytochrome c oxidoreductase (cytochrome b-c1 complex, complex III, CIII).

It localises to the mitochondrion inner membrane. It carries out the reaction 4 Fe(II)-[cytochrome c] + O2 + 8 H(+)(in) = 4 Fe(III)-[cytochrome c] + 2 H2O + 4 H(+)(out). Its function is as follows. Component of the cytochrome c oxidase, the last enzyme in the mitochondrial electron transport chain which drives oxidative phosphorylation. The respiratory chain contains 3 multisubunit complexes succinate dehydrogenase (complex II, CII), ubiquinol-cytochrome c oxidoreductase (cytochrome b-c1 complex, complex III, CIII) and cytochrome c oxidase (complex IV, CIV), that cooperate to transfer electrons derived from NADH and succinate to molecular oxygen, creating an electrochemical gradient over the inner membrane that drives transmembrane transport and the ATP synthase. Cytochrome c oxidase is the component of the respiratory chain that catalyzes the reduction of oxygen to water. Electrons originating from reduced cytochrome c in the intermembrane space (IMS) are transferred via the dinuclear copper A center (CU(A)) of subunit 2 and heme A of subunit 1 to the active site in subunit 1, a binuclear center (BNC) formed by heme A3 and copper B (CU(B)). The BNC reduces molecular oxygen to 2 water molecules using 4 electrons from cytochrome c in the IMS and 4 protons from the mitochondrial matrix. This chain is Cytochrome c oxidase subunit 3 (COX3), found in Triticum aestivum (Wheat).